The sequence spans 425 residues: MNIFIKGGRVIDPSQNIDETLDLLVVAGRIKELGKGLKAPADAEVIDAAGLLVTPGLIDMHVHLRDPGLEYKEDVITGTMAAAAGGFTSVACMPNTKPVNDNKAITSYIVNKAKAEALVNVFPVGAITQGSKGENLAEMGELKEAGCVAVSDDGRPVVNAELMRRALEYAKGMGVMVIAHSEELALVGEGVMNEGFTATELGLKGIPWAAEDVAVARDVYLAEFTNSPIHIAHISTKGSVRIIRDAKARGVQVTCETAPHYFSLTDDAVRGYETNAKMNPPLREAEDVAAIKTGLADGTIDAIATDHAPHHLDEKDVEFNVALNGIIGLETSLPLSLKLVEEKVLDMKTLVEKMAVRPAQILGLDRGTLKTGAPADVTIIDPKAEWVVEAEKLASKSKNSPFLGRKMTGAAAYTIVDGKVVHKRD.

The Zn(2+) site is built by His61 and His63. Substrate is bound by residues 63–65 (HLR) and Asn95. Asp153, His180, and His233 together coordinate Zn(2+). A substrate-binding site is contributed by Asn279. Asp306 provides a ligand contact to Zn(2+). Asp306 is an active-site residue. Substrate is bound at residue His310.

The protein belongs to the metallo-dependent hydrolases superfamily. DHOase family. Class I DHOase subfamily. Zn(2+) serves as cofactor.

It carries out the reaction (S)-dihydroorotate + H2O = N-carbamoyl-L-aspartate + H(+). It participates in pyrimidine metabolism; UMP biosynthesis via de novo pathway; (S)-dihydroorotate from bicarbonate: step 3/3. In terms of biological role, catalyzes the reversible cyclization of carbamoyl aspartate to dihydroorotate. The sequence is that of Dihydroorotase from Geotalea daltonii (strain DSM 22248 / JCM 15807 / FRC-32) (Geobacter daltonii).